A 41-amino-acid polypeptide reads, in one-letter code: Augerpeptide hhe6.1 (41 aa).

3 disulfide bridges follow: cysteine 11-cysteine 32, cysteine 18-cysteine 35, and cysteine 31-cysteine 40.

As to expression, expressed by the venom duct.

Its subcellular location is the secreted. This Hastula hectica (Sea snail) protein is Augerpeptide hhe6.1.